An 87-amino-acid chain; its full sequence is Protein WFDC11 (87 aa).

The first 25 residues, 1 to 25 (MVSLMKLWIPMLMTFFCTVLLSVLG), serve as a signal peptide directing secretion.

The protein resides in the secreted. In Homo sapiens (Human), this protein is Protein WFDC11 (WFDC11).